An 880-amino-acid chain; its full sequence is Probable LRR receptor-like serine/threonine-protein kinase At2g28960 (880 aa).

An N-terminal signal peptide occupies residues 1–24 (MEGRRQRLLVFIFGALAITHLVQA). Residues 25–511 (QPPDQRGFIS…NNNNQTYIVP (487 aa)) are Extracellular-facing. Asn180, Asn201, Asn228, Asn254, Asn287, Asn403, Asn430, and Asn441 each carry an N-linked (GlcNAc...) asparagine glycan. 3 LRR repeats span residues 409 to 430 (RIISLDLSSRGLKGVIAPAFQN), 433 to 455 (ELRKLDLSNNSFTGGVPEFLASM), and 457 to 476 (SLSIINLNWNDLTGPLPKLL). Asn505 carries an N-linked (GlcNAc...) asparagine glycan. A helical transmembrane segment spans residues 512-532 (VVASVASVLIIIAVLILILVF). The Cytoplasmic segment spans residues 533 to 880 (KKRRPTQVDS…FTTEINPKAR (348 aa)). Thr564 carries the phosphothreonine modification. The Protein kinase domain maps to 573-846 (DNFERVLGEG…QVTNELKQCL (274 aa)). Residues 579–587 (LGEGGFGVV) and Lys601 each bind ATP. Tyr646 is modified (phosphotyrosine). The active-site Proton acceptor is Asp698. Ser732 is subject to Phosphoserine. Thr733 and Thr738 each carry phosphothreonine. The residue at position 746 (Tyr746) is a Phosphotyrosine. The segment at 854-880 (GVREDMGSRSSVEMSTSFTTEINPKAR) is disordered. Polar residues predominate over residues 861-880 (SRSSVEMSTSFTTEINPKAR).

Belongs to the protein kinase superfamily. Ser/Thr protein kinase family.

The protein localises to the membrane. The catalysed reaction is L-seryl-[protein] + ATP = O-phospho-L-seryl-[protein] + ADP + H(+). It catalyses the reaction L-threonyl-[protein] + ATP = O-phospho-L-threonyl-[protein] + ADP + H(+). In Arabidopsis thaliana (Mouse-ear cress), this protein is Probable LRR receptor-like serine/threonine-protein kinase At2g28960.